A 396-amino-acid chain; its full sequence is Ribosomal RNA large subunit methyltransferase G (396 aa).

Belongs to the methyltransferase superfamily. RlmG family.

The protein resides in the cytoplasm. The catalysed reaction is guanosine(1835) in 23S rRNA + S-adenosyl-L-methionine = N(2)-methylguanosine(1835) in 23S rRNA + S-adenosyl-L-homocysteine + H(+). Specifically methylates the guanine in position 1835 (m2G1835) of 23S rRNA. The sequence is that of Ribosomal RNA large subunit methyltransferase G from Yersinia enterocolitica serotype O:8 / biotype 1B (strain NCTC 13174 / 8081).